The chain runs to 222 residues: Holliday junction branch migration complex subunit RuvA (222 aa).

A domain I region spans residues 1 to 67 (MISWLNGLKI…EDGSQLIGFL (67 aa)). Positions 68 to 146 (NKLERDLFRK…DLIGSSLKKT (79 aa)) are domain II. Residues 147-155 (NNHLELEYE) form a flexible linker region. Residues 155–222 (ETNVADEVRS…TLIRINTESG (68 aa)) are domain III.

The protein belongs to the RuvA family. As to quaternary structure, homotetramer. Forms an RuvA(8)-RuvB(12)-Holliday junction (HJ) complex. HJ DNA is sandwiched between 2 RuvA tetramers; dsDNA enters through RuvA and exits via RuvB. An RuvB hexamer assembles on each DNA strand where it exits the tetramer. Each RuvB hexamer is contacted by two RuvA subunits (via domain III) on 2 adjacent RuvB subunits; this complex drives branch migration. In the full resolvosome a probable DNA-RuvA(4)-RuvB(12)-RuvC(2) complex forms which resolves the HJ.

It is found in the cytoplasm. Its function is as follows. The RuvA-RuvB-RuvC complex processes Holliday junction (HJ) DNA during genetic recombination and DNA repair, while the RuvA-RuvB complex plays an important role in the rescue of blocked DNA replication forks via replication fork reversal (RFR). RuvA specifically binds to HJ cruciform DNA, conferring on it an open structure. The RuvB hexamer acts as an ATP-dependent pump, pulling dsDNA into and through the RuvAB complex. HJ branch migration allows RuvC to scan DNA until it finds its consensus sequence, where it cleaves and resolves the cruciform DNA. This is Holliday junction branch migration complex subunit RuvA from Prochlorococcus marinus (strain SARG / CCMP1375 / SS120).